We begin with the raw amino-acid sequence, 265 residues long: 4-hydroxy-tetrahydrodipicolinate reductase (265 aa).

Residues 7 to 12 (GASGRM) and Asp33 each bind NAD(+). Residue Arg34 participates in NADP(+) binding. Residues 96–98 (GTT) and 120–123 (SANM) each bind NAD(+). His153 (proton donor/acceptor) is an active-site residue. Residue His154 participates in (S)-2,3,4,5-tetrahydrodipicolinate binding. Lys157 (proton donor) is an active-site residue. (S)-2,3,4,5-tetrahydrodipicolinate is bound at residue 163–164 (GT).

Belongs to the DapB family.

It is found in the cytoplasm. It catalyses the reaction (S)-2,3,4,5-tetrahydrodipicolinate + NAD(+) + H2O = (2S,4S)-4-hydroxy-2,3,4,5-tetrahydrodipicolinate + NADH + H(+). The enzyme catalyses (S)-2,3,4,5-tetrahydrodipicolinate + NADP(+) + H2O = (2S,4S)-4-hydroxy-2,3,4,5-tetrahydrodipicolinate + NADPH + H(+). It functions in the pathway amino-acid biosynthesis; L-lysine biosynthesis via DAP pathway; (S)-tetrahydrodipicolinate from L-aspartate: step 4/4. In terms of biological role, catalyzes the conversion of 4-hydroxy-tetrahydrodipicolinate (HTPA) to tetrahydrodipicolinate. In Burkholderia pseudomallei (strain 1106a), this protein is 4-hydroxy-tetrahydrodipicolinate reductase.